Consider the following 362-residue polypeptide: MKASILSKLESLVERYEEVQHLLGDPTVIGDQNKFRALSKEYSQLEEITQCFQAYQQAKEDLVAAEEMAQEDDAEMREMAQDEIKAAKAAIERLTDELQILLLPKDPNDDRNCFLEIRAGAGGDEAGIFAGDLFRMYSRFAEKKGWRIEVMSSSEAEHGGYKEMIAKVNGDGAYGTLKFESGGHRVQRVPATEAQGRIHTSACTVAVMPEIPEAEIPEIKASDLKIDTFRSSGAGGQHVNTTDSAIRITHLPTGIVVECQDERSQHKNKAKAMSVLAARIAQAEESKRAAEISDTRRNLLGSGDRSDRIRTYNYPQGRVSDHRINLTVYRLTEVMEGDMQSLIDPVIHEHQADQLAALADQN.

The residue at position 237 (Gln-237) is an N5-methylglutamine. Residues 289-308 (AAEISDTRRNLLGSGDRSDR) form a disordered region.

This sequence belongs to the prokaryotic/mitochondrial release factor family. In terms of processing, methylated by PrmC. Methylation increases the termination efficiency of RF1.

It is found in the cytoplasm. In terms of biological role, peptide chain release factor 1 directs the termination of translation in response to the peptide chain termination codons UAG and UAA. This chain is Peptide chain release factor 1, found in Vibrio cholerae serotype O1 (strain ATCC 39541 / Classical Ogawa 395 / O395).